The following is a 267-amino-acid chain: Undecaprenyl-diphosphatase (267 aa).

7 helical membrane passes run 1–21 (MTLF…FLPV), 49–69 (VGTL…AVAG), 83–103 (AFLA…GLAL), 111–131 (ALRS…VLYW), 190–210 (MLMS…EVAA), 219–239 (DAAI…TLMM), and 245–265 (VSFT…LIIA).

It belongs to the UppP family.

It localises to the cell inner membrane. It carries out the reaction di-trans,octa-cis-undecaprenyl diphosphate + H2O = di-trans,octa-cis-undecaprenyl phosphate + phosphate + H(+). Catalyzes the dephosphorylation of undecaprenyl diphosphate (UPP). Confers resistance to bacitracin. The sequence is that of Undecaprenyl-diphosphatase from Dinoroseobacter shibae (strain DSM 16493 / NCIMB 14021 / DFL 12).